A 370-amino-acid polypeptide reads, in one-letter code: Dual-specificity RNA methyltransferase RlmN (370 aa).

The active-site Proton acceptor is the E93. One can recognise a Radical SAM core domain in the interval 99–337 (AEGRGTLCVS…VTTVRKTRGD (239 aa)). C106 and C343 form a disulfide bridge. The [4Fe-4S] cluster site is built by C113, C117, and C120. S-adenosyl-L-methionine-binding positions include 167 to 168 (GE), S199, 221 to 223 (SLH), and N300. Residue C343 is the S-methylcysteine intermediate of the active site.

The protein belongs to the radical SAM superfamily. RlmN family. Requires [4Fe-4S] cluster as cofactor.

The protein resides in the cytoplasm. The enzyme catalyses adenosine(2503) in 23S rRNA + 2 reduced [2Fe-2S]-[ferredoxin] + 2 S-adenosyl-L-methionine = 2-methyladenosine(2503) in 23S rRNA + 5'-deoxyadenosine + L-methionine + 2 oxidized [2Fe-2S]-[ferredoxin] + S-adenosyl-L-homocysteine. It catalyses the reaction adenosine(37) in tRNA + 2 reduced [2Fe-2S]-[ferredoxin] + 2 S-adenosyl-L-methionine = 2-methyladenosine(37) in tRNA + 5'-deoxyadenosine + L-methionine + 2 oxidized [2Fe-2S]-[ferredoxin] + S-adenosyl-L-homocysteine. Functionally, specifically methylates position 2 of adenine 2503 in 23S rRNA and position 2 of adenine 37 in tRNAs. m2A2503 modification seems to play a crucial role in the proofreading step occurring at the peptidyl transferase center and thus would serve to optimize ribosomal fidelity. In Francisella tularensis subsp. tularensis (strain FSC 198), this protein is Dual-specificity RNA methyltransferase RlmN.